The sequence spans 217 residues: ATP phosphoribosyltransferase (217 aa).

Belongs to the ATP phosphoribosyltransferase family. Short subfamily. As to quaternary structure, heteromultimer composed of HisG and HisZ subunits.

Its subcellular location is the cytoplasm. It catalyses the reaction 1-(5-phospho-beta-D-ribosyl)-ATP + diphosphate = 5-phospho-alpha-D-ribose 1-diphosphate + ATP. Its pathway is amino-acid biosynthesis; L-histidine biosynthesis; L-histidine from 5-phospho-alpha-D-ribose 1-diphosphate: step 1/9. In terms of biological role, catalyzes the condensation of ATP and 5-phosphoribose 1-diphosphate to form N'-(5'-phosphoribosyl)-ATP (PR-ATP). Has a crucial role in the pathway because the rate of histidine biosynthesis seems to be controlled primarily by regulation of HisG enzymatic activity. In Synechococcus sp. (strain WH7803), this protein is ATP phosphoribosyltransferase.